The chain runs to 190 residues: Xanthine phosphoribosyltransferase 2 (190 aa).

Xanthine-binding residues include Leu-20 and Asn-27. 129–133 (ANGCA) contacts 5-phospho-alpha-D-ribose 1-diphosphate. Lys-157 contributes to the xanthine binding site.

This sequence belongs to the purine/pyrimidine phosphoribosyltransferase family. Xpt subfamily. As to quaternary structure, homodimer.

It is found in the cytoplasm. The catalysed reaction is XMP + diphosphate = xanthine + 5-phospho-alpha-D-ribose 1-diphosphate. It functions in the pathway purine metabolism; XMP biosynthesis via salvage pathway; XMP from xanthine: step 1/1. Its function is as follows. Converts the preformed base xanthine, a product of nucleic acid breakdown, to xanthosine 5'-monophosphate (XMP), so it can be reused for RNA or DNA synthesis. The protein is Xanthine phosphoribosyltransferase 2 of Clostridium botulinum (strain Langeland / NCTC 10281 / Type F).